Reading from the N-terminus, the 70-residue chain is Large ribosomal subunit protein bL31 (70 aa).

The Zn(2+) site is built by Cys16, Cys18, Cys37, and Cys40.

It belongs to the bacterial ribosomal protein bL31 family. Type A subfamily. Part of the 50S ribosomal subunit. Requires Zn(2+) as cofactor.

Its function is as follows. Binds the 23S rRNA. The polypeptide is Large ribosomal subunit protein bL31 (Alteromonas mediterranea (strain DSM 17117 / CIP 110805 / LMG 28347 / Deep ecotype)).